We begin with the raw amino-acid sequence, 965 residues long: PWWP domain-containing protein 4 (965 aa).

A PWWP domain is found at 135 to 196 (VGDMVWGKVK…PAELIPFEPH (62 aa)). Positions 437-455 (MNFTSSSGNIPGKKSSVSK) are enriched in polar residues. Disordered stretches follow at residues 437 to 507 (MNFT…KSSL), 526 to 577 (VVKR…KSSQ), 649 to 708 (SAKT…SLAP), and 905 to 927 (LSSQ…PPLD). 2 stretches are compositionally biased toward basic and acidic residues: residues 456-474 (LSRD…RMGE) and 481-495 (DQEK…KQDE). Positions 496 to 507 (TGTNSRSNKSSL) are enriched in polar residues. The Nuclear localization signal motif lies at 546-553 (KKKEYVSE). Basic and acidic residues predominate over residues 549-563 (EYVSELNRDTPDKRK). Residues 657-676 (NEQSKAGRNRISSDSQQDVP) show a composition bias toward polar residues. The segment covering 691-702 (ASDKKTNQDATK) has biased composition (basic and acidic residues). Positions 905–919 (LSSQDSEPKPVNNQV) are enriched in polar residues.

The protein belongs to the PDP family. Component of the PRC2 (polycomb repressive complex 2) complex which regulates histone methylation on histone H3K27.

The protein resides in the nucleus. Functionally, may influence gene expression by regulating the function of the PRC2 complex and modulating H3K27me3 level. This is PWWP domain-containing protein 4 from Arabidopsis thaliana (Mouse-ear cress).